Reading from the N-terminus, the 1754-residue chain is Intraflagellar transport protein 172 homolog (1754 aa).

WD repeat units follow at residues 14-53 (EQIQ…RDKF), 64-103 (KNSY…NDKK), 110-149 (PQAS…QSLY), 151-190 (GDSI…EPLG), 194-232 (QHPV…RTFD), 283-322 (ACLY…TVWQ), and 519-557 (TLLS…EHVT). TPR repeat units lie at residues 623–656 (KAMW…SKAY), 690–723 (GSDL…DEAV), 748–781 (SEQQ…ARAA), 807–840 (SELY…ARAL), 852–885 (TALE…QKAL), 1041–1074 (RGKL…EDGY), 1140–1166 (DEVH…FLKA), 1167–1199 (NKPR…AVGE), 1211–1250 (TSNY…AEEH), 1282–1315 (SRSY…NAED), and 1698–1733 (FPVR…SPGS).

This sequence belongs to the IFT172 family.

It is found in the cell projection. The protein resides in the cilium. Its function is as follows. Required for the maintenance and formation of cilia. In Drosophila melanogaster (Fruit fly), this protein is Intraflagellar transport protein 172 homolog.